Reading from the N-terminus, the 362-residue chain is 2-oxoglutarate-dependent dioxygenase lolO2 (362 aa).

Positions 199–312 (TWNYFLGQPV…RYSLVFFGHL (114 aa)) constitute a Fe2OG dioxygenase domain. 3 residues coordinate Fe cation: H222, D224, and H280. R303 is a binding site for 2-oxoglutarate.

This sequence belongs to the iron/ascorbate-dependent oxidoreductase family. Requires Fe(2+) as cofactor.

It participates in alkaloid biosynthesis. Its function is as follows. 2-oxoglutarate-dependent dioxygenase; part of the gene cluster that mediates the biosynthesis of loline alkaloids, potent insecticidal agents composed of a pyrrolizidine ring system and an uncommon ether bridge linking carbons 2 and 7. Lolines are structurally differentiated by the various modifications of the L-amino group and include norloline, loline, N-methylloline, N-acetylloline, N-acetylnorloline, and N-formylloline. The first committed step is the condensation of O-acetyl-L-homoserine (derived from L-aspartic acid) and L-proline, probably catalyzed by the gamma-type pyridoxal 5'-phosphate(PLP)-dependent enzyme lolC, to give the diamino diacid, NACPP. Ensuing cyclization, decarboxylation, and acetylation steps yield 1-exo-acetamidopyrrolizidine (AcAP). LolO is required for installation of the ether bridge upon the pathway intermediate, 1-exo-acetamidopyrrolizidine (AcAP). In sequential 2-oxoglutarate- and O(2)-consuming steps, lolO removes hydrogens from C2 and C7 of AcAP to form both carbon-oxygen bonds in N-acetylnorloline (NANL), the precursor to all other lolines. The enzymes lolD, lolE, lolF and lolT have also been proposed to be involved in the ether-bridge installation. Further processing of the exocyclic moiety of NANL by fungal N-acetamidase (LolN), methyltransferase (LolM), and cytochrome P450 (LolP) enzymes, with occasional involvement of a plant acetyltransferase, generates the other known lolines. LolN transforms NANL to norlonine which is monomethylated and dimethylated to respectively lonine and N-methyllonine (NML) by lolM. LolP catalyzes hydroxylation of the methyl group in N-methylloline (NML) and further oxygenation to N-formylloline (NFL). A plant acetyltransferase is responsible for the acetylation of loline to form N-acetylloline (NAL). LolA might interact with aspartate kinase to prevent feedback inhibition of its activity by these end products and thereby promote production of L-homoserine from L-aspartate. The sequence is that of 2-oxoglutarate-dependent dioxygenase lolO2 from Epichloe uncinata (Endophyte fungus).